A 528-amino-acid chain; its full sequence is Cytochrome P450 monooxygenase lenC (528 aa).

Residues 5–27 (FVLPHPASMGASCILGLLLLTIL) traverse the membrane as a helical segment. Position 469 (C469) interacts with heme.

It belongs to the cytochrome P450 family. Heme is required as a cofactor.

It is found in the membrane. Its pathway is alkaloid biosynthesis. In terms of biological role, nonribosomal peptide synthetase; part of the gene cluster that mediates the biosynthesis of the ergot alkaloids lentopeptins A and B. Within the pathway, lenC catalyzes the post-NRPS oxidative modification steps using as substrate the N-acyldiketopiperazine intermediate produced by the NRPS lenA. Lentopeptin A forms via a stereospecific hydroxylation, followed by a spontaneous bicyclic lactam core formation, while lentopeptin B is produced through an initial dehydrogenation, followed by a bicyclic lactam core formation and stereospecific hydration. The phenylalanine ammonia-lyase lenB provides the cinnamic acid starter unit to the NRPS lenA for the synthesis of the N-acyldiketopiperazine intermediate which in turn is converted into lentopeptins A and B by lenC. This Aspergillus lentulus protein is Cytochrome P450 monooxygenase lenC.